The sequence spans 380 residues: Cytochrome b (380 aa).

4 helical membrane-spanning segments follow: residues 33-53, 77-98, 113-133, and 178-198; these read FGSL…FLAM, WLIR…YLHV, WNIG…GYVL, and FFAF…LHLL. His-83 and His-97 together coordinate heme b. Heme b-binding residues include His-182 and His-196. An a ubiquinone-binding site is contributed by His-201. Transmembrane regions (helical) follow at residues 226-246, 288-308, 320-340, and 347-367; these read YKDI…ALFS, LGGV…PILH, FSQF…WIGG, and FIII…LLIP.

Belongs to the cytochrome b family. In terms of assembly, the cytochrome bc1 complex contains 3 respiratory subunits (MT-CYB, CYC1 and UQCRFS1), 2 core proteins (UQCRC1 and UQCRC2) and probably 6 low-molecular weight proteins. The cofactor is heme b.

Its subcellular location is the mitochondrion inner membrane. Component of the ubiquinol-cytochrome c reductase complex (complex III or cytochrome b-c1 complex) that is part of the mitochondrial respiratory chain. The b-c1 complex mediates electron transfer from ubiquinol to cytochrome c. Contributes to the generation of a proton gradient across the mitochondrial membrane that is then used for ATP synthesis. The protein is Cytochrome b (mt-cyb) of Arapaima gigas (Arapaima).